A 431-amino-acid chain; its full sequence is Chaperone SurA (431 aa).

The N-terminal stretch at methionine 1–alanine 20 is a signal peptide. PpiC domains follow at residues glycine 171 to aspartate 272 and valine 282 to aspartate 382.

It is found in the periplasm. It catalyses the reaction [protein]-peptidylproline (omega=180) = [protein]-peptidylproline (omega=0). Functionally, chaperone involved in the correct folding and assembly of outer membrane proteins. Recognizes specific patterns of aromatic residues and the orientation of their side chains, which are found more frequently in integral outer membrane proteins. May act in both early periplasmic and late outer membrane-associated steps of protein maturation. The chain is Chaperone SurA from Sodalis glossinidius (strain morsitans).